A 278-amino-acid chain; its full sequence is Nucleotide-binding protein Tlet_0523 (278 aa).

An ATP-binding site is contributed by 9 to 16 (GLSGAGKS). Residue 58-61 (DIRS) coordinates GTP.

This sequence belongs to the RapZ-like family.

Displays ATPase and GTPase activities. The sequence is that of Nucleotide-binding protein Tlet_0523 from Pseudothermotoga lettingae (strain ATCC BAA-301 / DSM 14385 / NBRC 107922 / TMO) (Thermotoga lettingae).